The chain runs to 56 residues: Large ribosomal subunit protein bL33 (56 aa).

A compositionally biased stretch (basic and acidic residues) spans Met-1–Leu-12. The tract at residues Met-1–Lys-28 is disordered. The span at Thr-15–Thr-25 shows a compositional bias: polar residues.

It belongs to the bacterial ribosomal protein bL33 family.

This is Large ribosomal subunit protein bL33 from Cupriavidus necator (strain ATCC 17699 / DSM 428 / KCTC 22496 / NCIMB 10442 / H16 / Stanier 337) (Ralstonia eutropha).